Reading from the N-terminus, the 284-residue chain is MSVIKDCFLNLLDRWRPPKTSRPWKPGQRVALVWPKDRCLVIRRRWRLVRDEGRDAQRLASYLCCPEPLRFVGSICTYNFLKHKGDHNVPSELYLGASGAMYLWTDHIYSDSLTFVAESITEFLNIGLRRCNFITVPEELPHTASLRALAGCMHIHAFAQWRATYRGRLMVMGDYSVIRVSTIRLYDWSEINDWRVMVGSNHVEPLGWLVSPYDVINLFVDDCMRVFAANNQHVCIVADSLMEFVTRGMTRCHENGIYYGTRSMRKLNKPTCPYGVDHQLFDDA.

It belongs to the herpesviridae US22 family. As to quaternary structure, interacts with host NMI; this interaction inhibits NMI interaction with STAT1.

The protein localises to the virion tegument. It localises to the host cytoplasm. In terms of biological role, plays a role in the inhibition of host innate immune response by disrupting the interaction between NMI and STAT1. In turn, NMI-mediated transcription of interferon-gamma stimulated genes is inhibited. The chain is Tegument protein UL23 (UL23) from Homo sapiens (Human).